Consider the following 106-residue polypeptide: MVRILHWLIRFYQIAISPMLGPRCRYIPTCSQYSLEAIHTHGAMKGTWLAIHRVCRCHPWGGSGYDPVPPKAIRFISFQQIDSQMLHVTVPFRERLLNLNHSNHLG.

It belongs to the UPF0161 family.

The protein resides in the cell inner membrane. In terms of biological role, could be involved in insertion of integral membrane proteins into the membrane. In Acinetobacter baylyi (strain ATCC 33305 / BD413 / ADP1), this protein is Putative membrane protein insertion efficiency factor.